A 312-amino-acid chain; its full sequence is Ribonuclease Z (312 aa).

The Zn(2+) site is built by histidine 63, histidine 65, aspartate 67, histidine 68, histidine 141, aspartate 212, and histidine 270. Aspartate 67 (proton acceptor) is an active-site residue.

This sequence belongs to the RNase Z family. In terms of assembly, homodimer. The cofactor is Zn(2+).

It carries out the reaction Endonucleolytic cleavage of RNA, removing extra 3' nucleotides from tRNA precursor, generating 3' termini of tRNAs. A 3'-hydroxy group is left at the tRNA terminus and a 5'-phosphoryl group is left at the trailer molecule.. Its function is as follows. Zinc phosphodiesterase, which displays some tRNA 3'-processing endonuclease activity. Probably involved in tRNA maturation, by removing a 3'-trailer from precursor tRNA. This is Ribonuclease Z from Lactobacillus helveticus (strain DPC 4571).